The chain runs to 222 residues: Phosphoribosylformylglycinamidine synthase subunit PurQ (222 aa).

The region spanning 3–222 (AAVLVFPGSN…ASLAAALVAA (220 aa)) is the Glutamine amidotransferase type-1 domain. Cysteine 86 (nucleophile) is an active-site residue. Catalysis depends on residues histidine 194 and glutamate 196.

Part of the FGAM synthase complex composed of 1 PurL, 1 PurQ and 2 PurS subunits.

Its subcellular location is the cytoplasm. The catalysed reaction is N(2)-formyl-N(1)-(5-phospho-beta-D-ribosyl)glycinamide + L-glutamine + ATP + H2O = 2-formamido-N(1)-(5-O-phospho-beta-D-ribosyl)acetamidine + L-glutamate + ADP + phosphate + H(+). The enzyme catalyses L-glutamine + H2O = L-glutamate + NH4(+). It participates in purine metabolism; IMP biosynthesis via de novo pathway; 5-amino-1-(5-phospho-D-ribosyl)imidazole from N(2)-formyl-N(1)-(5-phospho-D-ribosyl)glycinamide: step 1/2. Functionally, part of the phosphoribosylformylglycinamidine synthase complex involved in the purines biosynthetic pathway. Catalyzes the ATP-dependent conversion of formylglycinamide ribonucleotide (FGAR) and glutamine to yield formylglycinamidine ribonucleotide (FGAM) and glutamate. The FGAM synthase complex is composed of three subunits. PurQ produces an ammonia molecule by converting glutamine to glutamate. PurL transfers the ammonia molecule to FGAR to form FGAM in an ATP-dependent manner. PurS interacts with PurQ and PurL and is thought to assist in the transfer of the ammonia molecule from PurQ to PurL. The polypeptide is Phosphoribosylformylglycinamidine synthase subunit PurQ (Jannaschia sp. (strain CCS1)).